Reading from the N-terminus, the 65-residue chain is MPKIKTVRGAAKRFKKTASGGFKRKHANLRHILTKKSTKRKRHLRPKGMVSKGDLGLVIACLPYA.

Belongs to the bacterial ribosomal protein bL35 family.

This is Large ribosomal subunit protein bL35 from Erwinia tasmaniensis (strain DSM 17950 / CFBP 7177 / CIP 109463 / NCPPB 4357 / Et1/99).